The chain runs to 195 residues: Small ribosomal subunit protein uS4 (195 aa).

An S4 RNA-binding domain is found at 92 to 152 (SRLDNIVYRL…EKHKHKANKN (61 aa)).

This sequence belongs to the universal ribosomal protein uS4 family. In terms of assembly, part of the 30S ribosomal subunit. Contacts protein S5. The interaction surface between S4 and S5 is involved in control of translational fidelity.

In terms of biological role, one of the primary rRNA binding proteins, it binds directly to 16S rRNA where it nucleates assembly of the body of the 30S subunit. Its function is as follows. With S5 and S12 plays an important role in translational accuracy. This is Small ribosomal subunit protein uS4 from Karelsulcia muelleri (strain GWSS) (Sulcia muelleri).